The chain runs to 445 residues: Histidinol dehydrogenase (445 aa).

NAD(+)-binding residues include Tyr134, Gln198, and Asn226. The substrate site is built by Thr249, Gln271, and His274. Residues Gln271 and His274 each coordinate Zn(2+). Residues Glu340 and His341 each act as proton acceptor in the active site. 4 residues coordinate substrate: His341, Asp374, Glu428, and His433. Zn(2+) is bound at residue Asp374. His433 is a Zn(2+) binding site.

It belongs to the histidinol dehydrogenase family. Zn(2+) is required as a cofactor.

It carries out the reaction L-histidinol + 2 NAD(+) + H2O = L-histidine + 2 NADH + 3 H(+). The protein operates within amino-acid biosynthesis; L-histidine biosynthesis; L-histidine from 5-phospho-alpha-D-ribose 1-diphosphate: step 9/9. Its function is as follows. Catalyzes the sequential NAD-dependent oxidations of L-histidinol to L-histidinaldehyde and then to L-histidine. The sequence is that of Histidinol dehydrogenase from Nocardia farcinica (strain IFM 10152).